Here is a 532-residue protein sequence, read N- to C-terminus: Probable inorganic phosphate transporter 1-9 (532 aa).

At 1–22 (MPELSLLSALDAARIQWYHFKA) the chain is on the cytoplasmic side. Residues 23-43 (IIVAGMGLFTDAYDLFCIAPI) traverse the membrane as a helical segment. Residues 44 to 62 (MKMISQIYYHKDSIGTALL) lie on the Extracellular side of the membrane. The helical transmembrane segment at 63-83 (STSYAIALLGTALGQLIFGYL) threads the bilayer. At 84–91 (GDRVGRRK) the chain is on the cytoplasmic side. A helical transmembrane segment spans residues 92 to 112 (VYGLSLLIMVFSSFGCGFSVC). Over 113–124 (TTRRSCVMVSLG) the chain is Extracellular. A helical transmembrane segment spans residues 125–145 (FFRFVLGLGIGGDYPLSATIM). Topologically, residues 146 to 154 (SEFANKRTR) are cytoplasmic. Residues 155–175 (GAFIAAVFSMQGLGILMSSAV) form a helical membrane-spanning segment. Residues 176–207 (TMVVCLAFKNAGEGSSEKTNVAGLETLAPPES) lie on the Extracellular side of the membrane. A helical transmembrane segment spans residues 208-228 (DIAWRLILMIGALPAALTFYW). At 229 to 292 (RMLMPETARY…KLFSRRFLSL (64 aa)) the chain is on the cytoplasmic side. A helical transmembrane segment spans residues 293–313 (HGRDLFAASANWFLVDVVFYT). At 314–343 (SNLLLSQIFNFSNKPLNSTNVYDSAFEVAK) the chain is on the extracellular side. Residues 344–364 (LAAIVAACSTIPGYWFTVYFI) form a helical membrane-spanning segment. At 365–371 (DKIGRVK) the chain is on the cytoplasmic side. A helical transmembrane segment spans residues 372–392 (IQMMGFFLMAVVYLVAGIPYS). Residues 393–406 (WYWSKHEKTNKGFM) are Extracellular-facing. The chain crosses the membrane as a helical span at residues 407–427 (VLYGLIFFFSNFGPNTTTFII). Topologically, residues 428-441 (PAELFPARFRSTCH) are cytoplasmic. The chain crosses the membrane as a helical span at residues 442–462 (GISGAAGKFGAIVGTVGFLWA). Topologically, residues 463-478 (TRHHEEDGFPDVKRVR) are extracellular. A helical transmembrane segment spans residues 479–499 (IAFLILGGVCIAGMIVTYLFT). The Cytoplasmic portion of the chain corresponds to 500–532 (RETMGRSLEENEDEIVSTSAGSSPANELLRRQY). Residues 509 to 532 (ENEDEIVSTSAGSSPANELLRRQY) form a disordered region. Over residues 515-524 (VSTSAGSSPA) the composition is skewed to polar residues.

Belongs to the major facilitator superfamily. Phosphate:H(+) symporter (TC 2.A.1.9) family.

It is found in the membrane. Its function is as follows. High-affinity transporter for external inorganic phosphate. The polypeptide is Probable inorganic phosphate transporter 1-9 (PHT1-9) (Arabidopsis thaliana (Mouse-ear cress)).